A 320-amino-acid polypeptide reads, in one-letter code: Cilia- and flagella-associated protein 77 (320 aa).

The disordered stretch occupies residues 1–27; sequence MPEARSSGPDLTRWRKQQQPVRRTVSQ. Positions 17-27 are enriched in polar residues; that stretch reads QQQPVRRTVSQ.

Belongs to the CFAP77 family. As to quaternary structure, microtubule inner protein component of sperm flagellar doublet microtubules. Expressed in airway epithelial cells.

It localises to the cytoplasm. It is found in the cytoskeleton. The protein localises to the cilium axoneme. Its subcellular location is the flagellum axoneme. Its function is as follows. Microtubule inner protein (MIP) part of the dynein-decorated doublet microtubules (DMTs) in cilia axoneme, which is required for motile cilia beating. The chain is Cilia- and flagella-associated protein 77 from Homo sapiens (Human).